A 192-amino-acid chain; its full sequence is Fe/S biogenesis protein NfuA (192 aa).

Positions 150 and 153 each coordinate [4Fe-4S] cluster.

Belongs to the NfuA family. Homodimer. The cofactor is [4Fe-4S] cluster.

In terms of biological role, involved in iron-sulfur cluster biogenesis. Binds a 4Fe-4S cluster, can transfer this cluster to apoproteins, and thereby intervenes in the maturation of Fe/S proteins. Could also act as a scaffold/chaperone for damaged Fe/S proteins. This Buchnera aphidicola subsp. Acyrthosiphon pisum (strain 5A) protein is Fe/S biogenesis protein NfuA.